The following is an 807-amino-acid chain: Glycerol-3-phosphate acyltransferase (807 aa).

The HXXXXD motif motif lies at 306-311; it reads HRSHMD.

This sequence belongs to the GPAT/DAPAT family.

It is found in the cell inner membrane. The catalysed reaction is sn-glycerol 3-phosphate + an acyl-CoA = a 1-acyl-sn-glycero-3-phosphate + CoA. Its pathway is phospholipid metabolism; CDP-diacylglycerol biosynthesis; CDP-diacylglycerol from sn-glycerol 3-phosphate: step 1/3. This is Glycerol-3-phosphate acyltransferase (plsB) from Escherichia coli O157:H7.